The following is a 210-amino-acid chain: Outer-membrane lipoprotein carrier protein (210 aa).

The N-terminal stretch at 1-26 (MHMIRRAAGALAVFAVAALAAAPAWA) is a signal peptide.

The protein belongs to the LolA family. As to quaternary structure, monomer.

The protein resides in the periplasm. Participates in the translocation of lipoproteins from the inner membrane to the outer membrane. Only forms a complex with a lipoprotein if the residue after the N-terminal Cys is not an aspartate (The Asp acts as a targeting signal to indicate that the lipoprotein should stay in the inner membrane). The polypeptide is Outer-membrane lipoprotein carrier protein (Bordetella bronchiseptica (strain ATCC BAA-588 / NCTC 13252 / RB50) (Alcaligenes bronchisepticus)).